Reading from the N-terminus, the 282-residue chain is Large ribosomal subunit protein uL2 (282 aa).

A disordered region spans residues 230–282 (AMNPIDHPLGGGEGRSSGGRHPVSPWGMPAKGYKTRDKKKASSRLIVKRRGQK). Residues 265-282 (RDKKKASSRLIVKRRGQK) are compositionally biased toward basic residues.

It belongs to the universal ribosomal protein uL2 family. In terms of assembly, part of the 50S ribosomal subunit. Forms a bridge to the 30S subunit in the 70S ribosome.

Its function is as follows. One of the primary rRNA binding proteins. Required for association of the 30S and 50S subunits to form the 70S ribosome, for tRNA binding and peptide bond formation. It has been suggested to have peptidyltransferase activity; this is somewhat controversial. Makes several contacts with the 16S rRNA in the 70S ribosome. The chain is Large ribosomal subunit protein uL2 from Desulfovibrio desulfuricans (strain ATCC 27774 / DSM 6949 / MB).